Consider the following 410-residue polypeptide: Eukaryotic initiation factor 4A (410 aa).

Positions 37–65 match the Q motif motif; the sequence is ESFDSMGLQENLLRGIYAYGFEKPSAIQQ. The 171-residue stretch at 68–238 folds into the Helicase ATP-binding domain; it reads IVPFCKGLDV…RKFMNKPVRI (171 aa). 81 to 88 is a binding site for ATP; sequence AQSGTGKT. The DEAD box motif lies at 186-189; the sequence is DEAD. A Helicase C-terminal domain is found at 249-410; it reads GIKQFYVNID…ELPANVADLL (162 aa).

This sequence belongs to the DEAD box helicase family. eIF4A subfamily. EIF4F is a multi-subunit complex, the composition of which varies with external and internal environmental conditions. It is composed of at least EIF4A, EIF4E and EIF4G.

The enzyme catalyses ATP + H2O = ADP + phosphate + H(+). Functionally, ATP-dependent RNA helicase which is a subunit of the eIF4F complex involved in cap recognition and is required for mRNA binding to ribosome. In the current model of translation initiation, eIF4A unwinds RNA secondary structures in the 5'-UTR of mRNAs which is necessary to allow efficient binding of the small ribosomal subunit, and subsequent scanning for the initiator codon. In Zea mays (Maize), this protein is Eukaryotic initiation factor 4A.